The sequence spans 173 residues: ATP synthase subunit b 1 (173 aa).

Residues 15 to 37 traverse the membrane as a helical segment; it reads TFWVTVAVLIFLAFFGRKIVGAI.

The protein belongs to the ATPase B chain family. As to quaternary structure, F-type ATPases have 2 components, F(1) - the catalytic core - and F(0) - the membrane proton channel. F(1) has five subunits: alpha(3), beta(3), gamma(1), delta(1), epsilon(1). F(0) has three main subunits: a(1), b(2) and c(10-14). The alpha and beta chains form an alternating ring which encloses part of the gamma chain. F(1) is attached to F(0) by a central stalk formed by the gamma and epsilon chains, while a peripheral stalk is formed by the delta and b chains.

The protein resides in the cell inner membrane. Its function is as follows. F(1)F(0) ATP synthase produces ATP from ADP in the presence of a proton or sodium gradient. F-type ATPases consist of two structural domains, F(1) containing the extramembraneous catalytic core and F(0) containing the membrane proton channel, linked together by a central stalk and a peripheral stalk. During catalysis, ATP synthesis in the catalytic domain of F(1) is coupled via a rotary mechanism of the central stalk subunits to proton translocation. Functionally, component of the F(0) channel, it forms part of the peripheral stalk, linking F(1) to F(0). In Acidiphilium cryptum (strain JF-5), this protein is ATP synthase subunit b 1.